Here is an 879-residue protein sequence, read N- to C-terminus: Aminopeptidase M1 (879 aa).

A required for membrane association region spans residues 98 to 205 (HGVGVLKLGF…MSTYLVAIVV (108 aa)). Substrate is bound by residues Glu-138 and 271-275 (GAMEN). His-307 lines the Zn(2+) pocket. The active-site Proton acceptor is Glu-308. His-311 and Glu-330 together coordinate Zn(2+). Positions 728–729 (LL) match the Dileucine internalization motif motif.

This sequence belongs to the peptidase M1 family. As to quaternary structure, homodimer. Interacts with N-1-naphthylphthalamic acid (NPA). Zn(2+) serves as cofactor. Ubiquitous with preferential expression in 5 days-old seedlings, roots, young flowers, upper inflorescence stems, and rosette leaves.

The protein localises to the membrane. It is found in the microsome membrane. Its subcellular location is the cytoplasm. The enzyme catalyses Release of an N-terminal amino acid, Xaa-|-Yaa- from a peptide, amide or arylamide. Xaa is preferably Ala, but may be most amino acids including Pro (slow action). When a terminal hydrophobic residue is followed by a prolyl residue, the two may be released as an intact Xaa-Pro dipeptide.. Its function is as follows. Metallopeptidase that binds to the auxin transport inhibitor N-1-naphthylphthalamic acid (NPA). Required for embryonic and seedling development as well as cell cycle progression. Homodimerization is required to proper localization and activity. May play a negative role in the regulation of PIN auxin transport proteins. This Arabidopsis thaliana (Mouse-ear cress) protein is Aminopeptidase M1 (APM1).